Consider the following 178-residue polypeptide: Large ribosomal subunit protein uL6 (178 aa).

Belongs to the universal ribosomal protein uL6 family. As to quaternary structure, part of the 50S ribosomal subunit. Interacts weakly with protein L13.

This protein binds to the 23S rRNA, and is important in its secondary structure. It is located near the subunit interface in the base of the L7/L12 stalk, and near the tRNA binding site of the peptidyltransferase center. The polypeptide is Large ribosomal subunit protein uL6 (Haloarcula marismortui (strain ATCC 43049 / DSM 3752 / JCM 8966 / VKM B-1809) (Halobacterium marismortui)).